Reading from the N-terminus, the 460-residue chain is UDP-glycosyltransferase 74B1 (460 aa).

H22 functions as the Proton acceptor in the catalytic mechanism. H22 provides a ligand contact to an anthocyanidin. D113 serves as the catalytic Charge relay. Positions 135, 339, 354, 357, 358, 359, 362, 378, and 379 each coordinate UDP-alpha-D-glucose.

The protein belongs to the UDP-glycosyltransferase family. As to expression, expressed in the vasculature, the apical meristems of roots, shoots and inflorescence, and the junction of organ or branches.

It carries out the reaction (Z)-2-phenyl-1-thioacetohydroximate + UDP-alpha-D-glucose = (Z)-desulfoglucotropeolin + UDP. It catalyses the reaction a (Z)-omega-(methylsulfanyl)alkyl-thiohydroximate + UDP-alpha-D-glucose = an aliphatic (Z)-desulfo-glucosinolate + UDP. The catalysed reaction is (Z)-2-(indol-3-yl)-1-thioacetohydroximate + UDP-alpha-D-glucose = (Z)-indolylmethyl desulfoglucosinolate + UDP. Functionally, involved in the biosynthesis of glucosinolate. In in vitro assay, may use phenylacetothiohydroximate (PATH), but not phenylacetic acid (PAA), indole-3-acetic acid (IAA) or salicylic acid (SA) as substrate. Specific for the thiohydroximate functional group and does not glucosylate the carboxylate group or a hydroxyl group. The protein is UDP-glycosyltransferase 74B1 (UGT74B1) of Arabidopsis thaliana (Mouse-ear cress).